A 325-amino-acid polypeptide reads, in one-letter code: Cytochrome f (325 aa).

Positions 1 to 40 are cleaved as a signal peptide; it reads MSKINLSTMWSSFIKKIAKTILVAIACISLFLTSSPAANA. Residues Tyr-41, Cys-62, Cys-65, and His-66 each coordinate heme. The chain crosses the membrane as a helical span at residues 291-311; that stretch reads VKWLMAFFALVMLAQIMLVLK.

It belongs to the cytochrome f family. As to quaternary structure, the 4 large subunits of the cytochrome b6-f complex are cytochrome b6, subunit IV (17 kDa polypeptide, PetD), cytochrome f and the Rieske protein, while the 4 small subunits are PetG, PetL, PetM and PetN. The complex functions as a dimer. Heme serves as cofactor.

It localises to the cellular thylakoid membrane. Component of the cytochrome b6-f complex, which mediates electron transfer between photosystem II (PSII) and photosystem I (PSI), cyclic electron flow around PSI, and state transitions. This chain is Cytochrome f, found in Trichodesmium erythraeum (strain IMS101).